We begin with the raw amino-acid sequence, 253 residues long: uncharacterized protein (253 aa).

The first 19 residues, 1–19 (MRYLKKVTIYISLLILVSG), serve as a signal peptide directing secretion. C20 carries N-palmitoyl cysteine lipidation. A lipid anchor (S-diacylglycerol cysteine) is attached at C20.

This sequence belongs to the staphylococcal tandem lipoprotein family.

It localises to the cell membrane. This is an uncharacterized protein from Staphylococcus epidermidis (strain ATCC 35984 / DSM 28319 / BCRC 17069 / CCUG 31568 / BM 3577 / RP62A).